The chain runs to 393 residues: Uroporphyrinogen decarboxylase, chloroplastic (393 aa).

The tract at residues 1–64 (MATACPPLSL…AGERNQREEV (64 aa)) is disordered. A compositionally biased stretch (low complexity) spans 23 to 37 (AGPNAGSSRPSAAAP). The span at 38-50 (SERRSWRRPRPDG) shows a compositional bias: basic and acidic residues. Residues 73–77 (RQAGR), F92, S122, D123, Y200, S255, and H370 each bind substrate.

Belongs to the uroporphyrinogen decarboxylase family. As to quaternary structure, homodimer.

It is found in the plastid. The protein resides in the chloroplast. It carries out the reaction uroporphyrinogen III + 4 H(+) = coproporphyrinogen III + 4 CO2. Its pathway is porphyrin-containing compound metabolism; protoporphyrin-IX biosynthesis; coproporphyrinogen-III from 5-aminolevulinate: step 4/4. Functionally, catalyzes the decarboxylation of four acetate groups of uroporphyrinogen-III to yield coproporphyrinogen-III. The protein is Uroporphyrinogen decarboxylase, chloroplastic (LES22) of Zea mays (Maize).